Here is a 116-residue protein sequence, read N- to C-terminus: Neuropeptide Y receptor type 1 (116 aa).

Residues 1 to 6 traverse the membrane as a helical segment; the sequence is LVLIAV. Residues 7-24 are Cytoplasmic-facing; it reads ERHQLIINPRGWRPSNRH. Residues 25 to 45 form a helical membrane-spanning segment; the sequence is AYVGIAVIWVLAVASSLPFLI. Topologically, residues 46 to 81 are extracellular; that stretch reads YQVLTDEPFQNVTLDAFKDKYVCFDKFPSDSHRLSY. N-linked (GlcNAc...) asparagine glycosylation occurs at Asn56. A helical transmembrane segment spans residues 82–102; the sequence is TTLLLVLQYFGPLCFIFICYF. Residues 103 to 116 lie on the Cytoplasmic side of the membrane; the sequence is KIYIRLKRRNNMMD.

This sequence belongs to the G-protein coupled receptor 1 family.

The protein localises to the cell membrane. In terms of biological role, receptor for neuropeptide Y and peptide YY. The protein is Neuropeptide Y receptor type 1 (NPY1R) of Ovis aries (Sheep).